Here is a 251-residue protein sequence, read N- to C-terminus: Triosephosphate isomerase (251 aa).

Residue 9–11 (NWK) coordinates substrate. His-95 serves as the catalytic Electrophile. Residue Glu-167 is the Proton acceptor of the active site. Residues Gly-173, Ser-212, and 233–234 (GG) each bind substrate.

It belongs to the triosephosphate isomerase family. In terms of assembly, homodimer.

Its subcellular location is the cytoplasm. The enzyme catalyses D-glyceraldehyde 3-phosphate = dihydroxyacetone phosphate. Its pathway is carbohydrate biosynthesis; gluconeogenesis. The protein operates within carbohydrate degradation; glycolysis; D-glyceraldehyde 3-phosphate from glycerone phosphate: step 1/1. Its function is as follows. Involved in the gluconeogenesis. Catalyzes stereospecifically the conversion of dihydroxyacetone phosphate (DHAP) to D-glyceraldehyde-3-phosphate (G3P). The polypeptide is Triosephosphate isomerase (Pseudomonas fluorescens (strain ATCC BAA-477 / NRRL B-23932 / Pf-5)).